We begin with the raw amino-acid sequence, 590 residues long: Probable serine/threonine-protein phosphatase PP2A regulatory subunit (590 aa).

HEAT repeat units follow at residues 37–73 (LSTI…VLAE), 74–111 (QLGN…DKAV), 113–150 (SLRK…TSAC), 151–188 (GLFS…RAAA), 189–227 (AKLG…LLTV), 228–266 (ESAI…YMVA), 267–305 (EKLI…CAAT), 306–344 (QRLQ…QLVK), 349–387 (GVIM…LNII), 388–426 (SSLD…LAIV), 427–465 (QFMP…EAST), 466–504 (LIMK…MTCL), 505–543 (FCLN…FNAA), and 544–582 (KSLK…YFSE).

It belongs to the phosphatase 2A regulatory subunit A family. As to quaternary structure, part of a complex consisting of a common heterodimeric core enzyme, composed of catalytic subunit let-92 and constant regulatory subunit paa-1, that associates with a variety of regulatory subunits which confer distinct properties to the holoenzyme. Interacts with rsa-1.

The protein resides in the cytoplasm. It is found in the cytoskeleton. Its subcellular location is the microtubule organizing center. It localises to the centrosome. The protein localises to the spindle. Functionally, acts as a scaffolding protein for phosphatase let-92 and its regulatory subunits. Probably together with let-92 and regulatory subunit sur-6, regulates centriole duplication, microtubule outgrowth and mitotic spindle stability during early embryonic cell division by preventing the degradation of sas-5 and kinase zyg-1. During vulva development, may play a role with phosphatase let-92 and regulatory subunit sur-6 in the induction of vulva cell precursors by positively regulating let-60/Ras-MAP kinase signaling, probably by promoting lin-45 activation. Plays a positive role in axon guidance probably by inhibiting phosphatase let-92. In Caenorhabditis elegans, this protein is Probable serine/threonine-protein phosphatase PP2A regulatory subunit (paa-1).